Reading from the N-terminus, the 173-residue chain is Large ribosomal subunit protein uL16 (173 aa).

The protein belongs to the universal ribosomal protein uL16 family.

This Methanococcus maripaludis (strain C6 / ATCC BAA-1332) protein is Large ribosomal subunit protein uL16.